The following is a 448-amino-acid chain: Binary larvicide subunit BinB (448 aa).

The interval 1–198 (MCDSKDNSGV…TAFVNSSFYA (198 aa)) is beta-trefoil domain. The cysteines at positions 67 and 161 are disulfide-linked. Residues 199 to 448 (AAIPQLPQTS…NEELIPKINQ (250 aa)) are probable pore-forming domain.

It belongs to the toxin_10 family. Forms a heterodimer with BinA. Post-translationally, processed by proteases extracted from mosquito larval gut.

It is found in the spore. Its subcellular location is the perispore. Functionally, component of a binary toxin active against Culex and some Aedes mosquito larvae; mortality towards both C.quinquefasciatus and A.atropalpus is maximal by 48 hours. A.aegypti is not very susceptible to this toxin. This subunit is responsible for localized binding to specific regions of the host larval gut. Binary toxin internalization into host gut cells requires both proteins. This is Binary larvicide subunit BinB (binB) from Lysinibacillus sphaericus (Bacillus sphaericus).